The sequence spans 392 residues: Neutrophil cytosol factor 1 (392 aa).

The PX domain maps to histidine 4 to leucine 125. 2 consecutive SH3 domains span residues isoleucine 156 to serine 215 and tyrosine 226 to glutamine 285. The tract at residues alanine 290–valine 392 is disordered. A phosphoserine mark is found at serine 304 and serine 305. Positions histidine 310–arginine 319 are enriched in basic residues. Residues serine 321, serine 329, and serine 348 each carry the phosphoserine modification. Basic and acidic residues predominate over residues isoleucine 376–lysine 385.

As to quaternary structure, component of the phagocyte NADPH oxidase complex composed of an obligatory core heterodimer formed by the membrane proteins CYBA and CYBB and the cytosolic regulatory subunits NCF1/p47-phox, NCF2/p67-phox, NCF4/p40-phox and the small GTPase RAC1 or RAC2. Part of a cytosolic complex composed at least by NCF1, NCF2 and NCF4. Interacts (via C-terminus) with NCF2 (via the C-terminal SH3 domain). Interacts with NCF4. Interacts with CYBB. Interacts (via the second SH3 domain) with CYBA; interaction is phosphorylation-dependent. Interacts with NOXA1. Interacts with ADAM15. Interacts with TRAF4. Interacts with FASLG. Interacts with PARK7 (via C-terminus); the interaction is enhanced by LPS and modulates NCF1 phosphorylation and membrane translocation. Phosphorylated by PRKCD; phosphorylation induces activation of NCF1, leading to assembly and activation of the NADPH oxidase complex.

It localises to the cytoplasm. It is found in the cytosol. Its subcellular location is the membrane. In terms of biological role, subunit of the phagocyte NADPH oxidase complex that mediates the transfer of electrons from cytosolic NADPH to O2 to produce the superoxide anion (O2(-)). In the activated complex, electrons are first transferred from NADPH to flavin adenine dinucleotide (FAD) and subsequently transferred via two heme molecules to molecular oxygen, producing superoxide through an outer-sphere reaction. Activation of the NADPH oxidase complex is initiated by the assembly of cytosolic subunits of the NADPH oxidase complex with the core NADPH oxidase complex to form a complex at the plasma membrane or phagosomal membrane. This activation process is initiated by phosphorylation dependent binding of the cytosolic NCF1/p47-phox subunit to the C-terminus of CYBA/p22-phox. The chain is Neutrophil cytosol factor 1 from Bos taurus (Bovine).